The following is a 101-amino-acid chain: Protein mes1 (101 aa).

Residues 1 to 19 show a composition bias toward basic and acidic residues; it reads MVNTDNKENEPPNMEKAHM. The segment at 1–101 is disordered; that stretch reads MVNTDNKENE…RSPNPLLSMR (101 aa).

Interacts with slp1.

Its subcellular location is the cytoplasm. It is found in the nucleus. Specifically required for meiosis II (MII). Binds to slp1, an activator of the anapahase promoting complex/cyclcosome (APC/C), and counteracts its function in promoting proteolysis of cdc13. By suppressing the degradation of cdc13 at anaphase I this protein may help maintain a sufficient level of cdc2 kinase activity to complete MII. The polypeptide is Protein mes1 (mes1) (Schizosaccharomyces pombe (strain 972 / ATCC 24843) (Fission yeast)).